We begin with the raw amino-acid sequence, 159 residues long: Serine-protein kinase RsbW (159 aa).

This sequence belongs to the anti-sigma-factor family.

It catalyses the reaction L-seryl-[protein] + ATP = O-phospho-L-seryl-[protein] + ADP + H(+). The catalysed reaction is L-threonyl-[protein] + ATP = O-phospho-L-threonyl-[protein] + ADP + H(+). Negative regulator of sigma-B activity. Phosphorylates and inactivates its specific antagonist protein, RsbV. Upon phosphorylation of RsbV, RsbW is released and binds to sigma-B, thereby blocking its ability to form an RNA polymerase holoenzyme (E-sigma-B). In Staphylococcus aureus, this protein is Serine-protein kinase RsbW.